The chain runs to 424 residues: GTPase Obg (424 aa).

Residues 1 to 159 form the Obg domain; the sequence is MVFIDTARIY…MWVRLELKLL (159 aa). In terms of domain architecture, OBG-type G spans 160-330; it reads ADVGLVGFPN…LLDKTIEILS (171 aa). GTP is bound by residues 166-173, 191-195, 212-215, 282-285, and 311-313; these read GFPNAGKS, FTTLT, DIPG, NKMD, and SAL. Mg(2+)-binding residues include serine 173 and threonine 193. In terms of domain architecture, OCT spans 347-424; the sequence is NPPEEEETLE…VRDFEFEYYE (78 aa).

Belongs to the TRAFAC class OBG-HflX-like GTPase superfamily. OBG GTPase family. In terms of assembly, monomer. Requires Mg(2+) as cofactor.

It localises to the cytoplasm. Its function is as follows. An essential GTPase which binds GTP, GDP and possibly (p)ppGpp with moderate affinity, with high nucleotide exchange rates and a fairly low GTP hydrolysis rate. Plays a role in control of the cell cycle, stress response, ribosome biogenesis and in those bacteria that undergo differentiation, in morphogenesis control. The sequence is that of GTPase Obg from Caldanaerobacter subterraneus subsp. tengcongensis (strain DSM 15242 / JCM 11007 / NBRC 100824 / MB4) (Thermoanaerobacter tengcongensis).